Reading from the N-terminus, the 192-residue chain is NADH-quinone oxidoreductase subunit B (192 aa).

[4Fe-4S] cluster contacts are provided by C71, C72, C136, and C166.

This sequence belongs to the complex I 20 kDa subunit family. NDH-1 is composed of 14 different subunits. Subunits NuoB, C, D, E, F, and G constitute the peripheral sector of the complex. The cofactor is [4Fe-4S] cluster.

Its subcellular location is the cell inner membrane. The catalysed reaction is a quinone + NADH + 5 H(+)(in) = a quinol + NAD(+) + 4 H(+)(out). NDH-1 shuttles electrons from NADH, via FMN and iron-sulfur (Fe-S) centers, to quinones in the respiratory chain. Couples the redox reaction to proton translocation (for every two electrons transferred, four hydrogen ions are translocated across the cytoplasmic membrane), and thus conserves the redox energy in a proton gradient. This is NADH-quinone oxidoreductase subunit B from Azorhizobium caulinodans (strain ATCC 43989 / DSM 5975 / JCM 20966 / LMG 6465 / NBRC 14845 / NCIMB 13405 / ORS 571).